The chain runs to 415 residues: Gamma-glutamyl phosphate reductase (415 aa).

The protein belongs to the gamma-glutamyl phosphate reductase family.

The protein localises to the cytoplasm. It catalyses the reaction L-glutamate 5-semialdehyde + phosphate + NADP(+) = L-glutamyl 5-phosphate + NADPH + H(+). It participates in amino-acid biosynthesis; L-proline biosynthesis; L-glutamate 5-semialdehyde from L-glutamate: step 2/2. In terms of biological role, catalyzes the NADPH-dependent reduction of L-glutamate 5-phosphate into L-glutamate 5-semialdehyde and phosphate. The product spontaneously undergoes cyclization to form 1-pyrroline-5-carboxylate. This chain is Gamma-glutamyl phosphate reductase, found in Listeria monocytogenes serovar 1/2a (strain ATCC BAA-679 / EGD-e).